We begin with the raw amino-acid sequence, 1029 residues long: Beta-galactosidase (1029 aa).

Substrate is bound by residues asparagine 108 and aspartate 207. Aspartate 207 provides a ligand contact to Na(+). Glutamate 422, histidine 424, and glutamate 467 together coordinate Mg(2+). Residues glutamate 467 and 543–546 (EYAH) each bind substrate. Glutamate 467 (proton donor) is an active-site residue. Catalysis depends on glutamate 543, which acts as the Nucleophile. Asparagine 603 provides a ligand contact to Mg(2+). Residues phenylalanine 607 and asparagine 610 each contribute to the Na(+) site. Positions 610 and 1005 each coordinate substrate.

It belongs to the glycosyl hydrolase 2 family. In terms of assembly, homotetramer. The cofactor is Mg(2+). Requires Na(+) as cofactor.

The enzyme catalyses Hydrolysis of terminal non-reducing beta-D-galactose residues in beta-D-galactosides.. This is Beta-galactosidase from Escherichia coli.